Consider the following 228-residue polypeptide: Cytochrome c oxidase subunit 2 (228 aa).

Residues 1–14 lie on the Mitochondrial intermembrane side of the membrane; that stretch reads MANHSQLGFQDASS. Residues 15 to 45 form a helical membrane-spanning segment; it reads PIMEELVEFHDHALIVALAICSLVLYLLAHM. Residues 46 to 58 are Mitochondrial matrix-facing; the sequence is LMEKLSSNAVDAQ. A helical transmembrane segment spans residues 59 to 86; sequence EVELIWTILPAIVLVLLALPSLQILYMM. Over 87 to 228 the chain is Mitochondrial intermembrane; it reads DEIDEPDLTL…ETWSSLLSAS (142 aa). Cu cation contacts are provided by H160, C195, E197, C199, H203, and M206. E197 contributes to the Mg(2+) binding site.

The protein belongs to the cytochrome c oxidase subunit 2 family. As to quaternary structure, component of the cytochrome c oxidase (complex IV, CIV), a multisubunit enzyme composed of 14 subunits. The complex is composed of a catalytic core of 3 subunits MT-CO1, MT-CO2 and MT-CO3, encoded in the mitochondrial DNA, and 11 supernumerary subunits COX4I, COX5A, COX5B, COX6A, COX6B, COX6C, COX7A, COX7B, COX7C, COX8 and NDUFA4, which are encoded in the nuclear genome. The complex exists as a monomer or a dimer and forms supercomplexes (SCs) in the inner mitochondrial membrane with NADH-ubiquinone oxidoreductase (complex I, CI) and ubiquinol-cytochrome c oxidoreductase (cytochrome b-c1 complex, complex III, CIII), resulting in different assemblies (supercomplex SCI(1)III(2)IV(1) and megacomplex MCI(2)III(2)IV(2)). Found in a complex with TMEM177, COA6, COX18, COX20, SCO1 and SCO2. Interacts with TMEM177 in a COX20-dependent manner. Interacts with COX20. Interacts with COX16. Cu cation serves as cofactor.

It is found in the mitochondrion inner membrane. It carries out the reaction 4 Fe(II)-[cytochrome c] + O2 + 8 H(+)(in) = 4 Fe(III)-[cytochrome c] + 2 H2O + 4 H(+)(out). Component of the cytochrome c oxidase, the last enzyme in the mitochondrial electron transport chain which drives oxidative phosphorylation. The respiratory chain contains 3 multisubunit complexes succinate dehydrogenase (complex II, CII), ubiquinol-cytochrome c oxidoreductase (cytochrome b-c1 complex, complex III, CIII) and cytochrome c oxidase (complex IV, CIV), that cooperate to transfer electrons derived from NADH and succinate to molecular oxygen, creating an electrochemical gradient over the inner membrane that drives transmembrane transport and the ATP synthase. Cytochrome c oxidase is the component of the respiratory chain that catalyzes the reduction of oxygen to water. Electrons originating from reduced cytochrome c in the intermembrane space (IMS) are transferred via the dinuclear copper A center (CU(A)) of subunit 2 and heme A of subunit 1 to the active site in subunit 1, a binuclear center (BNC) formed by heme A3 and copper B (CU(B)). The BNC reduces molecular oxygen to 2 water molecules using 4 electrons from cytochrome c in the IMS and 4 protons from the mitochondrial matrix. The polypeptide is Cytochrome c oxidase subunit 2 (MT-CO2) (Cairina moschata (Muscovy duck)).